Here is a 138-residue protein sequence, read N- to C-terminus: Large ribosomal subunit protein eL27 (138 aa).

The protein belongs to the eukaryotic ribosomal protein eL27 family.

In Solanum tuberosum (Potato), this protein is Large ribosomal subunit protein eL27 (RPL27).